A 562-amino-acid chain; its full sequence is NAD-dependent malic enzyme (562 aa).

Tyr-101 (proton donor) is an active-site residue. Arg-154 lines the NAD(+) pocket. Residue Lys-172 is the Proton acceptor of the active site. Glu-243, Asp-244, and Asp-267 together coordinate a divalent metal cation. The NAD(+) site is built by Asp-267 and Asn-415.

This sequence belongs to the malic enzymes family. As to quaternary structure, homotetramer. Mg(2+) serves as cofactor. Requires Mn(2+) as cofactor.

It catalyses the reaction (S)-malate + NAD(+) = pyruvate + CO2 + NADH. It carries out the reaction oxaloacetate + H(+) = pyruvate + CO2. The chain is NAD-dependent malic enzyme from Vibrio campbellii (strain ATCC BAA-1116).